The following is a 346-amino-acid chain: Holliday junction branch migration complex subunit RuvB (346 aa).

A large ATPase domain (RuvB-L) region spans residues 4–184; it reads TDRLIAPTAK…FGIVQRLEFY (181 aa). Residues Arg24, Gly65, Lys68, Thr69, Thr70, 131–133, Arg174, Tyr184, and Arg221 each bind ATP; that span reads EDF. Residue Thr69 participates in Mg(2+) binding. The tract at residues 185–255 is small ATPAse domain (RuvB-S); sequence NVKDLTHIVA…LADKALNMLN (71 aa). Residues 258-346 form a head domain (RuvB-H) region; the sequence is ERGFDHMDRR…QESQGGEGIA (89 aa). The DNA site is built by Arg294, Arg313, and Arg318.

The protein belongs to the RuvB family. As to quaternary structure, homohexamer. Forms an RuvA(8)-RuvB(12)-Holliday junction (HJ) complex. HJ DNA is sandwiched between 2 RuvA tetramers; dsDNA enters through RuvA and exits via RuvB. An RuvB hexamer assembles on each DNA strand where it exits the tetramer. Each RuvB hexamer is contacted by two RuvA subunits (via domain III) on 2 adjacent RuvB subunits; this complex drives branch migration. In the full resolvosome a probable DNA-RuvA(4)-RuvB(12)-RuvC(2) complex forms which resolves the HJ.

It is found in the cytoplasm. The catalysed reaction is ATP + H2O = ADP + phosphate + H(+). Its function is as follows. The RuvA-RuvB-RuvC complex processes Holliday junction (HJ) DNA during genetic recombination and DNA repair, while the RuvA-RuvB complex plays an important role in the rescue of blocked DNA replication forks via replication fork reversal (RFR). RuvA specifically binds to HJ cruciform DNA, conferring on it an open structure. The RuvB hexamer acts as an ATP-dependent pump, pulling dsDNA into and through the RuvAB complex. RuvB forms 2 homohexamers on either side of HJ DNA bound by 1 or 2 RuvA tetramers; 4 subunits per hexamer contact DNA at a time. Coordinated motions by a converter formed by DNA-disengaged RuvB subunits stimulates ATP hydrolysis and nucleotide exchange. Immobilization of the converter enables RuvB to convert the ATP-contained energy into a lever motion, pulling 2 nucleotides of DNA out of the RuvA tetramer per ATP hydrolyzed, thus driving DNA branch migration. The RuvB motors rotate together with the DNA substrate, which together with the progressing nucleotide cycle form the mechanistic basis for DNA recombination by continuous HJ branch migration. Branch migration allows RuvC to scan DNA until it finds its consensus sequence, where it cleaves and resolves cruciform DNA. The sequence is that of Holliday junction branch migration complex subunit RuvB from Cellvibrio japonicus (strain Ueda107) (Pseudomonas fluorescens subsp. cellulosa).